Reading from the N-terminus, the 64-residue chain is Ferredoxin-like protein in nif region (64 aa).

Residues 2 to 30 (AFKIIASQCTQCGACEFECPSGAISFKTD) form the 4Fe-4S ferredoxin-type domain. Cys10, Cys13, Cys16, Cys20, Cys39, Cys42, Cys51, and Cys55 together coordinate [4Fe-4S] cluster.

It depends on [4Fe-4S] cluster as a cofactor.

The protein is Ferredoxin-like protein in nif region (fdxN) of Rhizobium leguminosarum bv. trifolii.